We begin with the raw amino-acid sequence, 38 residues long: MKVRASVKKRTPECKIVRRKGRLYVINKKNPKYKQRQG.

This sequence belongs to the bacterial ribosomal protein bL36 family.

The sequence is that of Large ribosomal subunit protein bL36 from Porphyromonas gingivalis (strain ATCC 33277 / DSM 20709 / CIP 103683 / JCM 12257 / NCTC 11834 / 2561).